The chain runs to 192 residues: dTTP/UTP pyrophosphatase (192 aa).

Asp-71 (proton acceptor) is an active-site residue.

The protein belongs to the Maf family. YhdE subfamily. The cofactor is a divalent metal cation.

It localises to the cytoplasm. It catalyses the reaction dTTP + H2O = dTMP + diphosphate + H(+). It carries out the reaction UTP + H2O = UMP + diphosphate + H(+). Its function is as follows. Nucleoside triphosphate pyrophosphatase that hydrolyzes dTTP and UTP. May have a dual role in cell division arrest and in preventing the incorporation of modified nucleotides into cellular nucleic acids. The polypeptide is dTTP/UTP pyrophosphatase (Clostridium tetani (strain Massachusetts / E88)).